We begin with the raw amino-acid sequence, 1686 residues long: A disintegrin and metalloproteinase with thrombospondin motifs 7 (1686 aa).

Positions 1–27 (MPGGPSPRSPAPLLRPLLLLLCALAPG) are cleaved as a signal peptide. Residues 28–236 (APGPAPGRAT…RPRLRRLHQR (209 aa)) constitute a propeptide that is removed on maturation. Asn-94 carries N-linked (GlcNAc...) asparagine glycosylation. The short motif at 202 to 209 (STCGVQVY) is the Cysteine switch element. Cys-204 contacts Zn(2+). Residues 242–452 (KWVETLVVAD…GWGLCLDDPP (211 aa)) enclose the Peptidase M12B domain. Disulfide bonds link Cys-318/Cys-372, Cys-347/Cys-354, Cys-366/Cys-447, Cys-405/Cys-431, Cys-474/Cys-497, Cys-485/Cys-503, Cys-492/Cys-522, Cys-516/Cys-527, Cys-550/Cys-587, Cys-554/Cys-592, and Cys-565/Cys-577. His-388 contributes to the Zn(2+) binding site. Glu-389 is a catalytic residue. Residues His-392 and His-398 each contribute to the Zn(2+) site. One can recognise a Disintegrin domain in the interval 462-537 (VPPGVLYDVS…VPVGFRPEAV (76 aa)). The TSP type-1 1 domain maps to 538–593 (DGGWSGWSAWSICSRSCGMGVQSAERQCTQPTPKYKGRYCVGERKRFRLCNLQACP). N-linked (GlcNAc...) asparagine glycosylation is found at Asn-693 and Asn-778. The spacer stretch occupies residues 698–809 (HTVSGTFEEA…PGVHYEYTIH (112 aa)). 3 consecutive TSP type-1 domains span residues 821 to 880 (PVFS…QPCP), 881 to 940 (ARWW…NRHV), and 942 to 995 (CPAT…PLCR). 3 disordered regions span residues 1024–1043 (HHLA…TMGN), 1080–1257 (PSEE…SPDV), and 1344–1396 (LGHM…PLAP). Polar residues predominate over residues 1182 to 1205 (DGLQTPATPESQNDFPVGKDSQSQ). The span at 1210–1226 (WRDRTNEVFKDDEEPKG) shows a compositional bias: basic and acidic residues. Low complexity predominate over residues 1360-1375 (PESLSPEVPLSSRLLS). 4 consecutive TSP type-1 domains span residues 1411-1459 (RNAG…RRCH), 1462-1522 (PCAT…QPCL), 1523-1567 (SWYT…PCNT), and 1569-1629 (PCTQ…EDCE). One can recognise a PLAC domain in the interval 1632–1672 (EPPRCERDRLSFGFCETLRLLGRCQLPTIRTQCCRSCSPPS). Residues 1666–1686 (RSCSPPSHGAPSRGHQRVARR) are disordered.

Interacts with COMP. It depends on Zn(2+) as a cofactor. In terms of processing, N-glycosylated. Can be O-fucosylated by POFUT2 on a serine or a threonine residue found within the consensus sequence C1-X(2)-(S/T)-C2-G of the TSP type-1 repeat domains where C1 and C2 are the first and second cysteine residue of the repeat, respectively. Fucosylated repeats can then be further glycosylated by the addition of a beta-1,3-glucose residue by the glucosyltransferase, B3GALTL. Fucosylation mediates the efficient secretion of ADAMTS family members. Can also be C-glycosylated with one or two mannose molecules on tryptophan residues within the consensus sequence W-X-X-W of the TPRs. N- and C-glycosylations can also facilitate secretion. Post-translationally, O-glycosylated proteoglycan; contains chondroitin sulfate. May be cleaved by a furin endopeptidase. The precursor is sequentially processed. Expressed in heart, brain, placenta, lung, liver, skeletal muscle, kidney and pancreas. Detected in meniscus, bone, tendon, cartilage, synovium, fat and ligaments.

It is found in the secreted. The protein localises to the extracellular space. The protein resides in the extracellular matrix. In terms of biological role, metalloprotease. Was previously shown to degrade COMP. However, a later study found no activity against COMP. The protein is A disintegrin and metalloproteinase with thrombospondin motifs 7 (ADAMTS7) of Homo sapiens (Human).